A 111-amino-acid chain; its full sequence is Large ribosomal subunit protein uL22 (111 aa).

Belongs to the universal ribosomal protein uL22 family. In terms of assembly, part of the 50S ribosomal subunit.

Its function is as follows. This protein binds specifically to 23S rRNA; its binding is stimulated by other ribosomal proteins, e.g. L4, L17, and L20. It is important during the early stages of 50S assembly. It makes multiple contacts with different domains of the 23S rRNA in the assembled 50S subunit and ribosome. Functionally, the globular domain of the protein is located near the polypeptide exit tunnel on the outside of the subunit, while an extended beta-hairpin is found that lines the wall of the exit tunnel in the center of the 70S ribosome. The sequence is that of Large ribosomal subunit protein uL22 from Mycoplasma mycoides subsp. mycoides SC (strain CCUG 32753 / NCTC 10114 / PG1).